The chain runs to 752 residues: MSLLLSNSALVGPKFRSSRISHASASLDIGLQRATSPQNASVATCFEETKGRIAKLFHKNELSVSTYDTAWVAMVPSPTSSEEPCFPACLNWLLENQCHDGSWARPHHHHMLKKDVLSSTLACILALKKWGVGEEQISRGLHFVELNFASATEKGQITPMGFDIIFPAMLDNARGLSLNLQLEPTTLNDLIYKRDLELKRCNQSNSAEKEVYWAHIAEGMGKLQDWESVMKYQRKNGSLFNSPSTTAAAFIALRNSDCLNYLYSAMNKFGSAVPAVYPLDIYSQLCLVDNLERLGISRFFSTEIQSVLDDTYRCWLDGDEEIFMDASTCALAFRTLRMNGYSVTSDSFTKAVQDCFSSSIPSHMRDVNTTLELYRASEIMLYPDEIELEKQHSRLRSLLEHELSSGSIQSSQLNAVVKHALDYPFYAILDRMAKKKTIEHYEFDDTRILKTSFCSPTFGNKDFLSLSVEDYNRCQAIHRKEFRELDRWFKETKLDELKFARQKYTYSYCTAAASFASPELSDARMSWAKNSVLIGIVDDLFDVKGSVEEKQNLIKLVELWDVDVSTQCCSQSVQIIFSALRSTICEIGDKGFKIQGRSITDHIIAIWLDVLYNMMKESEWAENKSVPTIDEYMKISHVSSGLGPVVLPSLYLVGPKLSQEMVNHSEYHSLFKLMSTCCRLLNDIRSYEREVEGGKPNALALYRVSSGGEMMMSKEAAISELERLIERQRRELMRTILEESVIPKCCKEIFGH.

The N-terminal 28 residues, 1–28 (MSLLLSNSALVGPKFRSSRISHASASLD), are a transit peptide targeting the chloroplast. Positions 538, 542, 682, and 690 each coordinate Mg(2+). The DDXXD motif signature appears at 538–542 (DDLFD).

Belongs to the terpene synthase family. Mg(2+) is required as a cofactor. In terms of tissue distribution, highly expressed in leaves.

It localises to the plastid. The protein resides in the chloroplast. It participates in secondary metabolite biosynthesis; terpenoid biosynthesis. Its function is as follows. Involved in the biosynthesis of ent-kaurene diterpenoids natural products such as oridonin, miltiradiene, eriocalyxin B and nezukol, known to exhibit antitumor, anti-inflammatory and antibacterial activities. Catalyzes the conversion of ent-copalyl diphosphate (ent-CPP) to ent-isopimaradiene like compounds. The chain is Kaurene synthase like 2, chloroplastic from Isodon rubescens (Rabdosia rubescens).